The sequence spans 112 residues: uncharacterized protein (112 aa).

Residues 6 to 60 (LRQLRKAHKLTMEQLAEKIGIAKSSYGGYEAESKKPPLDKLVILARLYDVSVDYI) form the HTH cro/C1-type domain. Residues 17-36 (MEQLAEKIGIAKSSYGGYEA) constitute a DNA-binding region (H-T-H motif).

This is an uncharacterized protein from Bacillus subtilis (strain 168).